A 177-amino-acid polypeptide reads, in one-letter code: Transcription termination/antitermination protein NusG (177 aa).

Residues 126–156 enclose the KOW domain; the sequence is PGETVRVIDGPFADFNGVVEEVNYEKSRIQV.

It belongs to the NusG family.

Functionally, participates in transcription elongation, termination and antitermination. The sequence is that of Transcription termination/antitermination protein NusG from Pseudomonas aeruginosa (strain ATCC 15692 / DSM 22644 / CIP 104116 / JCM 14847 / LMG 12228 / 1C / PRS 101 / PAO1).